A 134-amino-acid polypeptide reads, in one-letter code: Transcription antitermination protein NusB (134 aa).

Belongs to the NusB family.

In terms of biological role, involved in transcription antitermination. Required for transcription of ribosomal RNA (rRNA) genes. Binds specifically to the boxA antiterminator sequence of the ribosomal RNA (rrn) operons. This chain is Transcription antitermination protein NusB, found in Shewanella sediminis (strain HAW-EB3).